We begin with the raw amino-acid sequence, 72 residues long: MRLTINLSGFLEEIPEVEAIPYLLKMYLREVLALDIDIDPENPYDTAFKSNGVELNYRYHLTDDDFYFILEK.

This is an uncharacterized protein from Escherichia coli (Bacteriophage T4).